Here is a 671-residue protein sequence, read N- to C-terminus: MSKSFKLHSVFKPAGDQPEAIRKLEEGLENGLAHQTLLGVTGSGKTFTVANVIADLNRPTMILAPNKTLAAQLYGEMKEFFPDNAVEYFVSYYDYYQPEAYVPSSDTFIEKDASVNEHIEQMRLSATKALLERRDVVVVASVSAIYGLGDPDLYLKMMLHLTRGMIIDQRSILRRLSELQYSRNDQVFQRGTFRVRGEVIDIFPAESDEWALRVELFDEEVERLSIFDPLTGQLQHEVPRFTVYPKTHYVTPRERILQAMEEIKVELAERRQVLLANNKLLEEQRLSQRTQFDLEMMNELGYCSGIENYSRYLSGRGPGEAPPTLFDYLPADGLLIVDESHVTIPQIGGMYKGDRSRKETLVEYGFRLPSALDNRPMRFEEFEALAPQTIYVSATPGKYELEKSGGDIIEQVVRPTGLLDPLIEVRPVATQVDDLLSEIRIRAAINERVLVTTLTKRMAEDLTDYLSEHGAKVRYLHSDIDTVERVEIIRDLRLGEFDVLVGINLLREGLDMPEVSLVAILDADKEGFLRSERSLIQTIGRAARNLNGKAILYGDRITASMEKAIGETERRRAKQQAYNEERRIIPQGLNKKIGDILQLGQPSMRGKGKGRGSHKMADTTQYQSLSPKALDQKIRELEAKMYTYAQNLEFEQAAELRDQVHQLRQQFIAIS.

The region spanning 26-414 (EGLENGLAHQ…GGDIIEQVVR (389 aa)) is the Helicase ATP-binding domain. Residue 39-46 (GVTGSGKT) participates in ATP binding. Positions 92 to 115 (YYDYYQPEAYVPSSDTFIEKDASV) match the Beta-hairpin motif. In terms of domain architecture, Helicase C-terminal spans 431-593 (QVDDLLSEIR…IIPQGLNKKI (163 aa)). The 36-residue stretch at 631 to 666 (DQKIRELEAKMYTYAQNLEFEQAAELRDQVHQLRQQ) folds into the UVR domain.

It belongs to the UvrB family. As to quaternary structure, forms a heterotetramer with UvrA during the search for lesions. Interacts with UvrC in an incision complex.

It localises to the cytoplasm. In terms of biological role, the UvrABC repair system catalyzes the recognition and processing of DNA lesions. A damage recognition complex composed of 2 UvrA and 2 UvrB subunits scans DNA for abnormalities. Upon binding of the UvrA(2)B(2) complex to a putative damaged site, the DNA wraps around one UvrB monomer. DNA wrap is dependent on ATP binding by UvrB and probably causes local melting of the DNA helix, facilitating insertion of UvrB beta-hairpin between the DNA strands. Then UvrB probes one DNA strand for the presence of a lesion. If a lesion is found the UvrA subunits dissociate and the UvrB-DNA preincision complex is formed. This complex is subsequently bound by UvrC and the second UvrB is released. If no lesion is found, the DNA wraps around the other UvrB subunit that will check the other stand for damage. This is UvrABC system protein B from Yersinia pestis.